A 635-amino-acid chain; its full sequence is Extracellular metalloproteinase mep (635 aa).

Residues 1–19 form the signal peptide; sequence MMRGLLLAGALGLPLAVLA. Positions 20–246 are excised as a propeptide; sequence HPTHHAHGLQ…VHGVVDYVAE (227 aa). A glycan (N-linked (GlcNAc...) asparagine) is linked at N287. Over residues 290 to 309 the composition is skewed to polar residues; sequence TTRGNNGIAQSNPTGGSQYL. The disordered stretch occupies residues 290 to 311; that stretch reads TTRGNNGIAQSNPTGGSQYLKN. H430 provides a ligand contact to Zn(2+). The active site involves E431. Residue H434 coordinates Zn(2+).

Belongs to the peptidase M36 family. Zn(2+) serves as cofactor.

The protein resides in the secreted. Functionally, secreted metalloproteinase that allows assimilation of proteinaceous substrates. This is Extracellular metalloproteinase mep (mep) from Aspergillus flavus (strain ATCC 200026 / FGSC A1120 / IAM 13836 / NRRL 3357 / JCM 12722 / SRRC 167).